The primary structure comprises 546 residues: E3 ubiquitin-protein ligase NEURL1B (546 aa).

Positions 38-194 (APRFHAQAKG…ITDEVQLLES (157 aa)) constitute an NHR 1 domain. Thr-199 is modified (phosphothreonine). An NHR 2 domain is found at 270–424 (ELRFHATRGP…GVAGQLRLLG (155 aa)). Positions 429–490 (SSETMTPSGS…FSAPEPTGSR (62 aa)) are disordered. Low complexity predominate over residues 457-471 (SSSASESSLVTAPSS). An RING-type zinc finger spans residues 494–534 (CTVCFDSEVDTVIYTCGHMCLCHGCGLRLRRQARACCPICR).

As to quaternary structure, interacts with DLL1 and DLL4. Expressed in the limb buds and dorsal root ganglia. Expressed in brain and kidney and at low levels in the heart.

It is found in the cytoplasm. The enzyme catalyses S-ubiquitinyl-[E2 ubiquitin-conjugating enzyme]-L-cysteine + [acceptor protein]-L-lysine = [E2 ubiquitin-conjugating enzyme]-L-cysteine + N(6)-ubiquitinyl-[acceptor protein]-L-lysine.. Its pathway is protein modification; protein ubiquitination. Functionally, E3 ubiquitin-protein ligase involved in regulation of the Notch pathway through influencing the stability and activity of several Notch ligands. In Mus musculus (Mouse), this protein is E3 ubiquitin-protein ligase NEURL1B (Neurl1b).